We begin with the raw amino-acid sequence, 131 residues long: MSWQAYVDEHLMCEIDGHHLTAAAILGHDGSVWAQSSSFPQFKSEEITNIMNDFNEPGSLAPTGLYLGSTKYMVIQGEPGAVIRGKKGSGGVTVKKTNQALIFGIYEEPMTPGQCNMVVERLGDYLIEQGM.

Residues Cys13 and Cys115 are joined by a disulfide bond. Residues 81–97 carry the Involved in PIP2 interaction motif; it reads AVIRGKKGSGGVTVKKT. The residue at position 111 (Thr111) is a Phosphothreonine.

This sequence belongs to the profilin family. Occurs in many kinds of cells as a complex with monomeric actin in a 1:1 ratio.

The protein resides in the cytoplasm. The protein localises to the cytoskeleton. Binds to actin and affects the structure of the cytoskeleton. At high concentrations, profilin prevents the polymerization of actin, whereas it enhances it at low concentrations. This Phoenix dactylifera (Date palm) protein is Profilin.